We begin with the raw amino-acid sequence, 203 residues long: Small ribosomal subunit protein uS4 (203 aa).

An S4 RNA-binding domain is found at 93–153; the sequence is RRFDNVVFRA…PKSKNMSAVS (61 aa).

This sequence belongs to the universal ribosomal protein uS4 family. In terms of assembly, part of the 30S ribosomal subunit. Contacts protein S5. The interaction surface between S4 and S5 is involved in control of translational fidelity.

Its function is as follows. One of the primary rRNA binding proteins, it binds directly to 16S rRNA where it nucleates assembly of the body of the 30S subunit. With S5 and S12 plays an important role in translational accuracy. The polypeptide is Small ribosomal subunit protein uS4 (Chlorobium phaeovibrioides (strain DSM 265 / 1930) (Prosthecochloris vibrioformis (strain DSM 265))).